Consider the following 331-residue polypeptide: Ferredoxin--NADP reductase (331 aa).

FAD-binding residues include Glu34, Gln42, Tyr47, Val87, Phe120, Asp285, and Thr325.

The protein belongs to the ferredoxin--NADP reductase type 2 family. In terms of assembly, homodimer. The cofactor is FAD.

The catalysed reaction is 2 reduced [2Fe-2S]-[ferredoxin] + NADP(+) + H(+) = 2 oxidized [2Fe-2S]-[ferredoxin] + NADPH. This Levilactobacillus brevis (strain ATCC 367 / BCRC 12310 / CIP 105137 / JCM 1170 / LMG 11437 / NCIMB 947 / NCTC 947) (Lactobacillus brevis) protein is Ferredoxin--NADP reductase.